The following is a 614-amino-acid chain: DNA mismatch repair protein MutL (614 aa).

The segment at 355-411 (PLSTGRVSEADPSNYATQSKFDEKPRESGSQGQSSSISAPSSYSRGGEYSARSQPEL) is disordered. The span at 382-401 (SGSQGQSSSISAPSSYSRGG) shows a compositional bias: low complexity.

This sequence belongs to the DNA mismatch repair MutL/HexB family.

This protein is involved in the repair of mismatches in DNA. It is required for dam-dependent methyl-directed DNA mismatch repair. May act as a 'molecular matchmaker', a protein that promotes the formation of a stable complex between two or more DNA-binding proteins in an ATP-dependent manner without itself being part of a final effector complex. The sequence is that of DNA mismatch repair protein MutL from Shewanella woodyi (strain ATCC 51908 / MS32).